The chain runs to 271 residues: Putative glucose-6-phosphate 1-epimerase (271 aa).

Substrate contacts are provided by Arg71 and Arg93. His151 is an active-site residue. Asp193 is a substrate binding site. Residue Glu249 is part of the active site.

Belongs to the glucose-6-phosphate 1-epimerase family.

The enzyme catalyses alpha-D-glucose 6-phosphate = beta-D-glucose 6-phosphate. This Haemophilus influenzae (strain ATCC 51907 / DSM 11121 / KW20 / Rd) protein is Putative glucose-6-phosphate 1-epimerase.